A 463-amino-acid polypeptide reads, in one-letter code: MTTETRSLYSQLPAIDRLLRDSSFLSLRDTYGHTRVVELLRQMLDEAREVIRDSQTLPTWCENWAQEVDARLTKEAQSALRPVINLTGTVLHTNLGRALQAEAAVEAVAQAMRSPVTLEYDLDDAGRGHRDRALAQLLCRITGVEDACIVNNNAAAVLLMLAATASGKEVVVSRGELVEIGGSFRIPDVMRQAGCTLHEVGTTNRTHANDYRQAVNENTALLMKVHTSNYSIQGFTKAIDEAELVALGKELDVPVVTDLGSGSLVDLSQYGLPKEPMPQELIAAGVSLVSFSGDKLLGGPQAGIIVGKKEMIARLQSHPLKRALRADKMTLAALEATLRLYLHPEALSEKLPTLRLLTRSAEVIQIQAQRLQAPLAAHYGAEFAVQVMPCLSQIGSGSLPVDRLPSAALTFTPHDGRGSHLESLAARWRELPVPVIGRIYDGRLWLDLRCLEDEQRFLEMLLK.

N6-(pyridoxal phosphate)lysine is present on K295.

The protein belongs to the SelA family. As to quaternary structure, homodecamer; pentamer of dimers. Binds only one seryl-tRNA(Sec) per dimer. It depends on pyridoxal 5'-phosphate as a cofactor.

The protein resides in the cytoplasm. The catalysed reaction is L-seryl-tRNA(Sec) + selenophosphate + H(+) = L-selenocysteinyl-tRNA(Sec) + phosphate. Its pathway is aminoacyl-tRNA biosynthesis; selenocysteinyl-tRNA(Sec) biosynthesis; selenocysteinyl-tRNA(Sec) from L-seryl-tRNA(Sec) (bacterial route): step 1/1. Converts seryl-tRNA(Sec) to selenocysteinyl-tRNA(Sec) required for selenoprotein biosynthesis. The chain is L-seryl-tRNA(Sec) selenium transferase from Shigella dysenteriae serotype 1 (strain Sd197).